The chain runs to 72 residues: MSKEGKITLKGKVVTALQGGQFKVLLENNVEIIANVSGKIRVYKIQILKGDTVEVELSPYDLTRGRIIYRIS.

The S1-like domain maps to 1-72; that stretch reads MSKEGKITLK…TRGRIIYRIS (72 aa).

Belongs to the IF-1 family. Component of the 30S ribosomal translation pre-initiation complex which assembles on the 30S ribosome in the order IF-2 and IF-3, IF-1 and N-formylmethionyl-tRNA(fMet); mRNA recruitment can occur at any time during PIC assembly.

The protein resides in the cytoplasm. Its function is as follows. One of the essential components for the initiation of protein synthesis. Stabilizes the binding of IF-2 and IF-3 on the 30S subunit to which N-formylmethionyl-tRNA(fMet) subsequently binds. Helps modulate mRNA selection, yielding the 30S pre-initiation complex (PIC). Upon addition of the 50S ribosomal subunit IF-1, IF-2 and IF-3 are released leaving the mature 70S translation initiation complex. This Malacoplasma penetrans (strain HF-2) (Mycoplasma penetrans) protein is Translation initiation factor IF-1.